Reading from the N-terminus, the 562-residue chain is NAD-dependent malic enzyme 1 (562 aa).

Catalysis depends on Tyr101, which acts as the Proton donor. Position 154 (Arg154) interacts with NAD(+). Catalysis depends on Lys172, which acts as the Proton acceptor. A divalent metal cation contacts are provided by Glu243, Asp244, and Asp267. NAD(+) contacts are provided by Asp267 and Asn415.

The protein belongs to the malic enzymes family. In terms of assembly, homotetramer. Requires Mg(2+) as cofactor. The cofactor is Mn(2+).

It catalyses the reaction (S)-malate + NAD(+) = pyruvate + CO2 + NADH. The enzyme catalyses oxaloacetate + H(+) = pyruvate + CO2. This is NAD-dependent malic enzyme 1 from Vibrio vulnificus (strain YJ016).